The sequence spans 1375 residues: DNA-directed RNA polymerase subunit beta (1375 aa).

The protein belongs to the RNA polymerase beta chain family. In terms of assembly, the RNAP catalytic core consists of 2 alpha, 1 beta, 1 beta' and 1 omega subunit. When a sigma factor is associated with the core the holoenzyme is formed, which can initiate transcription.

It catalyses the reaction RNA(n) + a ribonucleoside 5'-triphosphate = RNA(n+1) + diphosphate. In terms of biological role, DNA-dependent RNA polymerase catalyzes the transcription of DNA into RNA using the four ribonucleoside triphosphates as substrates. The chain is DNA-directed RNA polymerase subunit beta from Coxiella burnetii (strain CbuG_Q212) (Coxiella burnetii (strain Q212)).